We begin with the raw amino-acid sequence, 67 residues long: SGERPWKCCDLQTCTKSIPAFCRCRDLLEQCSDACKECGKVRDSDPPRYICQDVYRGIPAPMCHEHQ.

Intrachain disulfides connect Cys-8/Cys-63, Cys-9/Cys-24, Cys-14/Cys-22, Cys-31/Cys-38, and Cys-35/Cys-51.

This sequence belongs to the Bowman-Birk serine protease inhibitor family.

The protein is Bowman-Birk type major trypsin inhibitor of Setaria italica (Foxtail millet).